Here is a 1555-residue protein sequence, read N- to C-terminus: Pre-mRNA cleavage complex 2 protein Pcf11 (1555 aa).

The residue at position 2 (S2) is an N-acetylserine. A CID domain is found at 14 to 142; it reads AREDACRDYQ…ALDVRVNSLD (129 aa). Position 120 is a phosphoserine; by WNK1 (S120). T121 carries the phosphothreonine; by WNK1 modification. The disordered stretch occupies residues 167 to 186; sequence NKSPEEPSTPGTVVSSPSIS. Residues S169 and S182 each carry the phosphoserine modification. A compositionally biased stretch (low complexity) spans 174-186; the sequence is STPGTVVSSPSIS. Residues 202–239 are a coiled coil; sequence QLIRQQLLAKQKQLLELQQKKLELELEQAKAQLAVSLS. The disordered stretch occupies residues 266–648; the sequence is VKAPHQVPVQ…QQQHRLSVDA (383 aa). A Glycyl lysine isopeptide (Lys-Gly) (interchain with G-Cter in SUMO2) cross-link involves residue K291. Basic and acidic residues predominate over residues 307–317; the sequence is HGKDQSHRKEF. Residues 320 to 333 show a composition bias toward polar residues; the sequence is NTLNQSDTKTSKTI. A Glycyl lysine isopeptide (Lys-Gly) (interchain with G-Cter in SUMO2) cross-link involves residue K328. Basic and acidic residues-rich tracts occupy residues 342 to 364, 380 to 421, and 427 to 442; these read KQEK…DSKS, HTKD…DVKE, and EKKD…EHRL. K456 is covalently cross-linked (Glycyl lysine isopeptide (Lys-Gly) (interchain with G-Cter in SUMO2)). T459 bears the Phosphothreonine mark. Basic residues predominate over residues 475-486; that stretch reads STRKRSRSRSPK. A phosphoserine mark is found at S489, S494, S509, and S511. Basic residues predominate over residues 494-508; sequence SPKRRDRRSPKRRQR. Positions 529-567 are enriched in basic and acidic residues; that stretch reads SHMEEFTPPSREDRNAKRSTKQDIRDPRRMKKTEEERPQ. The span at 568–578 shows a compositional bias: polar residues; sequence ETTNQHSTKSG. Residues 599 to 615 show a composition bias toward basic and acidic residues; it reads SGWEENKSLQQVDEHSK. S645 bears the Phosphoserine mark. A Glycyl lysine isopeptide (Lys-Gly) (interchain with G-Cter in SUMO2) cross-link involves residue K654. Position 705 is a phosphoserine (S705). Disordered regions lie at residues 707 to 732 and 749 to 781; these read FNDR…PASR and RPLF…PRID. Residues 716–725 show a composition bias toward basic and acidic residues; it reads PRYEDSDKPF. K723 participates in a covalent cross-link: Glycyl lysine isopeptide (Lys-Gly) (interchain with G-Cter in SUMO2). Phosphoserine occurs at positions 728 and 777. Phosphothreonine is present on T785. S794 is subject to Phosphoserine. R805, R820, and R833 each carry asymmetric dimethylarginine. A Phosphoserine modification is found at S851. Asymmetric dimethylarginine occurs at positions 929, 942, 955, 981, 994, and 1007. The tract at residues 1056-1081 is disordered; the sequence is HGQPGPRFERTPGQPGPQRFDGPPGQ. Residues R1093 and R1104 each carry the asymmetric dimethylarginine modification. 2 disordered regions span residues 1127 to 1147 and 1159 to 1187; these read VSFN…NAPS and FDSP…RASG. S1161 bears the Phosphoserine mark. A compositionally biased stretch (low complexity) spans 1162-1175; that stretch reads PQGPNFNGPHGPGN. Residue K1278 forms a Glycyl lysine isopeptide (Lys-Gly) (interchain with G-Cter in SUMO2) linkage. Positions 1289 to 1298 are enriched in polar residues; the sequence is SATTQVSEVT. Positions 1289 to 1315 are disordered; that stretch reads SATTQVSEVTAQPPPEEEEDQNEDQDV. The span at 1303-1315 shows a compositional bias: acidic residues; it reads PEEEEDQNEDQDV. Glycyl lysine isopeptide (Lys-Gly) (interchain with G-Cter in SUMO2) cross-links involve residues K1419, K1511, and K1524. The tract at residues 1516–1555 is disordered; sequence EPCDSPKVKEERIDTPPACTEESIATPSEIKTENDTVESV. Positions 1519-1529 are enriched in basic and acidic residues; the sequence is DSPKVKEERID. Position 1530 is a phosphothreonine (T1530). K1546 participates in a covalent cross-link: Glycyl lysine isopeptide (Lys-Gly) (interchain with G-Cter in SUMO2).

Associates with the phosphorylated CTD domain of POLR2A /RNA polymerase II. In terms of processing, phosphorylation at Ser-120 and/or Thr-121 by WNK1 weakens its association with POLR2A/RNA polymerase II, promoting transcript release from the chromatin template and mRNA export to the cytoplasm.

Its subcellular location is the nucleus. Its function is as follows. Component of pre-mRNA cleavage complex II, which promotes transcription termination by RNA polymerase II. This is Pre-mRNA cleavage complex 2 protein Pcf11 from Homo sapiens (Human).